The sequence spans 327 residues: Mitochondrial thiamine pyrophosphate carrier 1 (327 aa).

Solcar repeat units lie at residues 13–114 (GSKL…AAQL), 126–214 (PAAA…LRAP), and 222–317 (FWGG…VLRA). The next 6 membrane-spanning stretches (helical) occupy residues 16-36 (LQVV…IAPL), 95-111 (LLYI…YRSA), 132-152 (FVAG…LDLL), 189-209 (GIGP…AAYE), 223-245 (WGGQ…VFPL), and 292-309 (GLTV…VTMW).

This sequence belongs to the mitochondrial carrier (TC 2.A.29) family.

It is found in the mitochondrion inner membrane. In terms of biological role, mitochondrial transporter that mediates uptake of thiamine pyrophosphate (ThPP) into mitochondria. This is Mitochondrial thiamine pyrophosphate carrier 1 (TPC1) from Pyricularia oryzae (strain 70-15 / ATCC MYA-4617 / FGSC 8958) (Rice blast fungus).